The following is a 259-amino-acid chain: Small ribosomal subunit protein uS2 (259 aa).

The tract at residues 234-259 (VAEDSEEVSTVDADAITAEDFETEEV) is disordered. Residues 250–259 (TAEDFETEEV) show a composition bias toward acidic residues.

The protein belongs to the universal ribosomal protein uS2 family.

This Sulfurimonas denitrificans (strain ATCC 33889 / DSM 1251) (Thiomicrospira denitrificans (strain ATCC 33889 / DSM 1251)) protein is Small ribosomal subunit protein uS2.